Reading from the N-terminus, the 43-residue chain is uncharacterized protein (43 aa).

The disordered stretch occupies residues 13-43 (QLPRLSRPRQSHLPAQTPQPRLSYPKTRRQI).

This is an uncharacterized protein from Clover yellow mosaic virus (CYMV).